Consider the following 64-residue polypeptide: MAAKKGVRIIITLECTECRTNTDKRSPGVSRYTTSKNRRNTTGRMEIKKFCPHCNTHTIHKEIK.

The protein belongs to the bacterial ribosomal protein bL33 family.

This chain is Large ribosomal subunit protein bL33, found in Rippkaea orientalis (strain PCC 8801 / RF-1) (Cyanothece sp. (strain PCC 8801)).